Consider the following 295-residue polypeptide: Acetylglutamate kinase (295 aa).

Substrate contacts are provided by residues 66–67 (GG), R88, and N193.

Belongs to the acetylglutamate kinase family. ArgB subfamily.

The protein resides in the cytoplasm. The enzyme catalyses N-acetyl-L-glutamate + ATP = N-acetyl-L-glutamyl 5-phosphate + ADP. The protein operates within amino-acid biosynthesis; L-arginine biosynthesis; N(2)-acetyl-L-ornithine from L-glutamate: step 2/4. Catalyzes the ATP-dependent phosphorylation of N-acetyl-L-glutamate. The chain is Acetylglutamate kinase from Bradyrhizobium diazoefficiens (strain JCM 10833 / BCRC 13528 / IAM 13628 / NBRC 14792 / USDA 110).